A 160-amino-acid chain; its full sequence is NAD(P)H-quinone oxidoreductase subunit I, chloroplastic (160 aa).

4Fe-4S ferredoxin-type domains lie at 55–84 (GRIH…VDWK) and 95–124 (LNYS…MTEE). The [4Fe-4S] cluster site is built by Cys64, Cys67, Cys70, Cys74, Cys104, Cys107, Cys110, and Cys114.

Belongs to the complex I 23 kDa subunit family. As to quaternary structure, NDH is composed of at least 16 different subunits, 5 of which are encoded in the nucleus. The cofactor is [4Fe-4S] cluster.

Its subcellular location is the plastid. It is found in the chloroplast thylakoid membrane. It catalyses the reaction a plastoquinone + NADH + (n+1) H(+)(in) = a plastoquinol + NAD(+) + n H(+)(out). The enzyme catalyses a plastoquinone + NADPH + (n+1) H(+)(in) = a plastoquinol + NADP(+) + n H(+)(out). In terms of biological role, NDH shuttles electrons from NAD(P)H:plastoquinone, via FMN and iron-sulfur (Fe-S) centers, to quinones in the photosynthetic chain and possibly in a chloroplast respiratory chain. The immediate electron acceptor for the enzyme in this species is believed to be plastoquinone. Couples the redox reaction to proton translocation, and thus conserves the redox energy in a proton gradient. The protein is NAD(P)H-quinone oxidoreductase subunit I, chloroplastic of Cucumis sativus (Cucumber).